The following is a 238-amino-acid chain: MMKKKSWFTLMITGVISLFFSVSAFAGNVFWEPLSYFNSSTWQKADGYSNGQMFNCTWRANNVNFTNDGKLKLSLTSPANNKFDCGEYRSTNNYGYGLYEVSMKPAKNTGIVSSFFTYTGPSHGTQWDEIDIEFLGKDTTKVQFNYYTNGVGGHEKIINLGFDASTSFHTYAFDWQPGYIKWYVDGVLKHTATTNIPSTPGKIMMNLWNGTGVDSWLGSYNGANPLYAEYDWVKYTSN.

A signal peptide spans Met-1 to Ala-26. One can recognise a GH16 domain in the interval Val-29–Asn-238. A disulfide bond links Cys-56 and Cys-85. The active-site Nucleophile is Glu-129. Glu-133 functions as the Proton donor in the catalytic mechanism.

The protein belongs to the glycosyl hydrolase 16 family.

The enzyme catalyses Hydrolysis of (1-&gt;4)-beta-D-glucosidic linkages in beta-D-glucans containing (1-&gt;3)- and (1-&gt;4)-bonds.. This Paenibacillus polymyxa (Bacillus polymyxa) protein is Beta-glucanase (gluB).